The chain runs to 350 residues: tRNA uridine(34) hydroxylase (350 aa).

One can recognise a Rhodanese domain in the interval 146-240 (DDPDALFIDM…YARKAREQGL (95 aa)). Cys200 serves as the catalytic Cysteine persulfide intermediate.

Belongs to the TrhO family.

It catalyses the reaction uridine(34) in tRNA + AH2 + O2 = 5-hydroxyuridine(34) in tRNA + A + H2O. In terms of biological role, catalyzes oxygen-dependent 5-hydroxyuridine (ho5U) modification at position 34 in tRNAs. The sequence is that of tRNA uridine(34) hydroxylase from Shigella dysenteriae serotype 1 (strain Sd197).